Consider the following 383-residue polypeptide: Dimethylsulfoniopropionate lyase 6 (383 aa).

This sequence belongs to the aspartate/glutamate racemases family. ALMA1 subfamily. As to quaternary structure, homotetramer.

The enzyme catalyses S,S-dimethyl-beta-propiothetin = acrylate + dimethyl sulfide + H(+). Functionally, mediates cleavage of dimethylsulfoniopropionate (DMSP) into dimethyl sulfide (DMS) and acrylate. DMS is the principal form by which sulfur is transported from oceans to the atmosphere and is a key component of the ocean sulfur cycle. The sequence is that of Dimethylsulfoniopropionate lyase 6 from Emiliania huxleyi (strain CCMP1516).